The following is a 614-amino-acid chain: Threonine--tRNA ligase (614 aa).

Residues 1–141 are editing domain; sequence MRLLLIHSDY…LSKTIVPGEE (141 aa). The interval 198–490 is catalytic; it reads AHVDLMRSKE…ISTQKVPALP (293 aa). 3 residues coordinate Zn(2+): Cys-290, His-342, and His-463.

It belongs to the class-II aminoacyl-tRNA synthetase family. Homodimer. It depends on Zn(2+) as a cofactor.

It localises to the cytoplasm. The enzyme catalyses tRNA(Thr) + L-threonine + ATP = L-threonyl-tRNA(Thr) + AMP + diphosphate + H(+). Catalyzes the attachment of threonine to tRNA(Thr) in a two-step reaction: L-threonine is first activated by ATP to form Thr-AMP and then transferred to the acceptor end of tRNA(Thr). Also edits incorrectly charged L-seryl-tRNA(Thr). This is Threonine--tRNA ligase from Methanoregula boonei (strain DSM 21154 / JCM 14090 / 6A8).